Here is a 247-residue protein sequence, read N- to C-terminus: Bidirectional sugar transporter SWEET1 (247 aa).

At 1–6 (MNIAHT) the chain is on the extracellular side. Residues 7–27 (IFGVFGNATALFLFLAPSITF) form a helical membrane-spanning segment. Residues 7–94 (IFGVFGNATA…LIFLFYAPKK (88 aa)) enclose the MtN3/slv 1 domain. At 28–41 (KRIIKNKSTEQFSG) the chain is on the cytoplasmic side. The chain crosses the membrane as a helical span at residues 42 to 62 (IPYPMTLLNCLLSAWYGLPFV). Residues 63-71 (SKDNTLVST) are Extracellular-facing. Residues 72–92 (INGTGAVIETVYVLIFLFYAP) form a helical membrane-spanning segment. The Cytoplasmic portion of the chain corresponds to 93 to 98 (KKEKIK). The chain crosses the membrane as a helical span at residues 99-119 (IFGIFSCVLAVFATVALVSLF). Topologically, residues 120-127 (ALQGNGRK) are extracellular. The helical transmembrane segment at 128–148 (LFCGLAATVFSIIMYASPLSI) threads the bilayer. The 84-residue stretch at 130 to 213 (CGLAATVFSI…ILYFIYCGNK (84 aa)) folds into the MtN3/slv 2 domain. Residues 149 to 162 (MRLVVKTKSVEFMP) are Cytoplasmic-facing. The helical transmembrane segment at 163-183 (FFLSLFVFLCGTSWFVYGLIG) threads the bilayer. At 184–187 (RDPF) the chain is on the extracellular side. Residues 188–208 (VAIPNGFGCALGTLQLILYFI) traverse the membrane as a helical segment. The Cytoplasmic portion of the chain corresponds to 209–247 (YCGNKGEKSADAQKDEKSVEMKDDEKKQNVVNGKQDLQV). The span at 221–236 (QKDEKSVEMKDDEKKQ) shows a compositional bias: basic and acidic residues. Residues 221–247 (QKDEKSVEMKDDEKKQNVVNGKQDLQV) form a disordered region. A compositionally biased stretch (polar residues) spans 237–247 (NVVNGKQDLQV).

This sequence belongs to the SWEET sugar transporter family. Forms homooligomers and heterooligomers with SWEET9, SWEET11, SWEET13, SWEET15, SWEET16 and SWEET17. Mainly expressed in flowers.

The protein resides in the cell membrane. The protein localises to the endoplasmic reticulum membrane. Functionally, mediates both low-affinity uptake and efflux of sugar across the plasma membrane. Can transport glucose, and, to a lower extent, mannose, fructose and galactose. The sequence is that of Bidirectional sugar transporter SWEET1 from Arabidopsis thaliana (Mouse-ear cress).